A 175-amino-acid polypeptide reads, in one-letter code: Inorganic pyrophosphatase (175 aa).

3 residues coordinate substrate: K30, R44, and Y56. Residues D66, D71, and D103 each coordinate Mg(2+). Y140 contacts substrate.

It belongs to the PPase family. As to quaternary structure, homohexamer. It depends on Mg(2+) as a cofactor.

The protein resides in the cytoplasm. The catalysed reaction is diphosphate + H2O = 2 phosphate + H(+). Functionally, catalyzes the hydrolysis of inorganic pyrophosphate (PPi) forming two phosphate ions. The protein is Inorganic pyrophosphatase of Thermus thermophilus (strain ATCC 27634 / DSM 579 / HB8).